The chain runs to 1842 residues: Fatty acid synthase alpha subunit pigJ (1842 aa).

Residues 120 to 184 are disordered; the sequence is GAPVEEEGSK…TPAGGSTTPD (65 aa). Positions 140 to 175 are enriched in low complexity; that stretch reads SGSSRTATTAKATVTTPSSSSPETAPPAASTPSQGT. Residues 184-262 enclose the Carrier domain; it reads DIPLSAKHVV…DALQGNFPGK (79 aa). Ser222 carries the post-translational modification O-(pantetheine 4'-phosphoryl)serine. The interval 611–807 is beta-ketoacyl reductase; it reads GKTVLVTGAG…CGAAIGWVRG (197 aa). The region spanning 1058-1585 is the Ketosynthase family 3 (KS3) domain; the sequence is KEFLQEIVVE…QKGGIAVVVA (528 aa). Catalysis depends on for beta-ketoacyl synthase activity residues Cys1244, His1470, and His1511. The interval 1649-1672 is disordered; it reads KARVGGHPENNNNNNNNSSSKRNT. Positions 1658–1668 are enriched in low complexity; sequence NNNNNNNNSSS. Residues Asp1725, Val1726, and Glu1727 each coordinate Mg(2+). Acetyl-CoA-binding positions include 1725-1727, Ser1761, 1770-1780, and 1823-1825; these read DVE, EAVFKSLQTPS, and ITH. Mg(2+) contacts are provided by Thr1824 and His1825.

The protein belongs to the thiolase-like superfamily. Fungal fatty acid synthetase subunit alpha family. [Alpha(6)beta(6)] hexamers of two multifunctional subunits (alpha and beta).

It catalyses the reaction acetyl-CoA + n malonyl-CoA + 2n NADPH + 4n H(+) = a long-chain-acyl-CoA + n CoA + n CO2 + 2n NADP(+).. The catalysed reaction is a fatty acyl-[ACP] + malonyl-[ACP] + H(+) = a 3-oxoacyl-[ACP] + holo-[ACP] + CO2. The enzyme catalyses a (3R)-hydroxyacyl-[ACP] + NADP(+) = a 3-oxoacyl-[ACP] + NADPH + H(+). It participates in secondary metabolite biosynthesis. Its function is as follows. Fatty acid synthase alpha subunit; part of the gene cluster that mediates the biosynthesis of azaphilone pigments (MonAzPs), a complex mixture of compounds with a common azaphilone skeleton very widely used as food colorants. PigJ and pigK form the two subunits of a dedicated fungal fatty acid synthase (FAS) that produces the side chain fatty acyl moiety of MonAzPs, a beta-keto fatty acid. The chain length control of the pigJ-pigK FAS is somewhat flexible as MonAzPs features either a beta-ketooctanoic or a beta-ketodecanoic acid moiety. The beta-ketoacyl-ACP probably serves as the substrate for the acetyltransferase pigD that directly transfers the fatty acyl chain to the C-4 alcohol of the pyran ring. The first step of the pathway is performed by the nrPKS pigA that forms the hexaketide precursor from successive condensations of five malonyl-CoA units, with a simple acetyl-CoA starter unit. The role of esterase pigG is not clear, but it may play at most a supplementary role in the formation of the benzaldehyde produced by the pigA nrPKS. This very reactive benzaldehyde is intercepted by the pigC ketoreductase that to provide the first stable enzyme-free MonAzPs intermediate, 6-(4-hydroxy-2-oxopentyl)-3-methyl-2,4-dioxocyclohexane carbaldehyde, also known as M7PKS-1. The FAD-dependent monooxygenase pigN hydroxylates M7PKS-1 at C-4, which triggers the formation of the pyran ring. PigJ, pigK and pigD are involved in the acetylation of the pyran ring. PigJ and pigK form the two subunits of a dedicated fungal FAS that produces the side chain fatty acyl moiety of MonAzPs and pigD transfers the fatty acyl chain to the C-4 alcohol. PigM and pigO are involved in the elimination of the omega-1 alcohol. PigM acts as an O-acetyltransferase that synthesizes the putative O-11 acetyl intermediate whereas pigO eliminates acetic acid to yield an intermediate with a C10(11) double bond. The dehydration of the C-11 alcohol followed by the reduction of the C6(7) double bond by the NAD(P)H-dependent oxidoreductase pigE increases the electrophilicity of the C-5 ketone of the resulting acyl benzopyran. This in turn sets up the C-5 ketone for an intramolecular Knoevenagel aldol condensation with the C-20 enol of the side chain. This condensation affords the characteristic linear tricyclic carbon skeletons of the yellow pigments that serve as the common precursors for the classical yellow pigments monascin and ankaflavin, orange pigments rubopunctatin and monascorubrin, and red pigments ribropunctamine and monascorubramine. The FAD-dependent oxidoreductase pigF is especially invoved in the biosynthesis of orange and red pigments via desaturation of C6(7). The polypeptide is Fatty acid synthase alpha subunit pigJ (Monascus ruber (Mold)).